The following is a 294-amino-acid chain: Acetyl-coenzyme A carboxylase carboxyl transferase subunit beta (294 aa).

In terms of domain architecture, CoA carboxyltransferase N-terminal spans 25–294; sequence VWTKCTSCEQ…PLVVPVDGSH (270 aa). Residues C29, C32, C48, and C51 each contribute to the Zn(2+) site. Residues 29–51 form a C4-type zinc finger; that stretch reads CTSCEQVLYSAELERNLEVCPKC.

The protein belongs to the AccD/PCCB family. Acetyl-CoA carboxylase is a heterohexamer composed of biotin carboxyl carrier protein (AccB), biotin carboxylase (AccC) and two subunits each of ACCase subunit alpha (AccA) and ACCase subunit beta (AccD). Requires Zn(2+) as cofactor.

The protein localises to the cytoplasm. It catalyses the reaction N(6)-carboxybiotinyl-L-lysyl-[protein] + acetyl-CoA = N(6)-biotinyl-L-lysyl-[protein] + malonyl-CoA. It functions in the pathway lipid metabolism; malonyl-CoA biosynthesis; malonyl-CoA from acetyl-CoA: step 1/1. Its function is as follows. Component of the acetyl coenzyme A carboxylase (ACC) complex. Biotin carboxylase (BC) catalyzes the carboxylation of biotin on its carrier protein (BCCP) and then the CO(2) group is transferred by the transcarboxylase to acetyl-CoA to form malonyl-CoA. The polypeptide is Acetyl-coenzyme A carboxylase carboxyl transferase subunit beta (Aliivibrio fischeri (strain ATCC 700601 / ES114) (Vibrio fischeri)).